A 310-amino-acid polypeptide reads, in one-letter code: Membrane protein insertase YidC 2 (310 aa).

The N-terminal stretch at 1–23 (MKKTLKRILFSSLSLSILLLLTG) is a signal peptide. Cysteine 24 carries the N-palmitoyl cysteine lipid modification. Cysteine 24 carries S-diacylglycerol cysteine lipidation. A run of 5 helical transmembrane segments spans residues 33-53 (PYGV…TYFA), 58-78 (LGFG…ILPL), 135-155 (FGGI…AIFF), 180-200 (LTVI…QGVP), and 219-239 (VFMS…GGIF). A disordered region spans residues 262-310 (EYTKNPPKAYKSNNARKDVTSSTKTTESNQAIITSKKTNRNAGKQKRRG). Over residues 281-297 (TSSTKTTESNQAIITSK) the composition is skewed to polar residues. The span at 298–310 (KTNRNAGKQKRRG) shows a compositional bias: basic residues.

It belongs to the OXA1/ALB3/YidC family. Type 2 subfamily.

The protein localises to the cell membrane. Its function is as follows. Required for the insertion and/or proper folding and/or complex formation of integral membrane proteins into the membrane. Involved in integration of membrane proteins that insert both dependently and independently of the Sec translocase complex, as well as at least some lipoproteins. The sequence is that of Membrane protein insertase YidC 2 from Streptococcus agalactiae serotype III (strain NEM316).